The following is a 497-amino-acid chain: Homeotic protein empty spiracles (497 aa).

Disordered regions lie at residues 34 to 117 (NDVS…HLSP), 161 to 262 (SPLQ…MMMP), and 441 to 497 (NRRT…DASH). Positions 35-50 (DVSTAGGNSTPDLSGP) are enriched in polar residues. Residues 51-68 (QSPPPGERNVPGSPPQTP) show a composition bias toward pro residues. A compositionally biased stretch (low complexity) spans 96–117 (PHAQQQQQQHLQAPHPHPHLSP). The span at 161-176 (SPLQTRLSPETEQPQM) shows a compositional bias: polar residues. Composition is skewed to low complexity over residues 208–239 (PKSV…QQQQ) and 248–262 (PAMM…MMMP). Residues 391-450 (PKRIRTAFSPSQLLKLEHAFESNQYVVGAERKALAQNLNLSETQVKVWFQNRRTKHKRMQ) constitute a DNA-binding region (homeobox). The segment covering 470-497 (GDEDDDELIDMEMDECPSDEEHELDASH) has biased composition (acidic residues).

The protein belongs to the EMX homeobox family.

It is found in the nucleus. In terms of biological role, acts as a homeotic selector gene controlling antennal and mandibular segment identity. The chain is Homeotic protein empty spiracles (ems) from Drosophila melanogaster (Fruit fly).